A 547-amino-acid chain; its full sequence is Zinc metalloproteinase-disintegrin-like BjussuMP-1 (547 aa).

Positions 1–133 (EFKVNGEPVV…KKASKLVVTA (133 aa)) are excised as a propeptide. The 197-residue stretch at 141 to 337 (RYVEIVVVVD…HNPQCILNEP (197 aa)) folds into the Peptidase M12B domain. 2 residues coordinate Ca(2+): Glu144 and Asp228. Cystine bridges form between Cys252–Cys332, Cys292–Cys316, and Cys294–Cys299. His277 is a binding site for Zn(2+). Glu278 is a catalytic residue. Residues His281 and His287 each coordinate Zn(2+). The Ca(2+) site is built by Cys332, Asn335, Val341, Asn344, Leu346, Glu348, Glu351, and Asp354. In terms of domain architecture, Disintegrin spans 339–421 (LTVSGNELLE…DCPRNRFHRN (83 aa)). Intrachain disulfides connect Cys353/Cys363, Cys362/Cys385, Cys376/Cys382, Cys381/Cys406, Cys394/Cys413, Cys425/Cys437, Cys444/Cys494, Cys459/Cys501, Cys472/Cys482, Cys489/Cys526, and Cys520/Cys531. N-linked (GlcNAc...) asparagine glycosylation is present at Asn451. N-linked (GlcNAc...) asparagine glycosylation is present at Asn504.

This sequence belongs to the venom metalloproteinase (M12B) family. P-III subfamily. P-IIIa sub-subfamily. In terms of assembly, monomer. Zn(2+) serves as cofactor. Expressed by the venom gland.

The protein resides in the secreted. Completely inhibited by EDTA, EGTA, 1,10-phenanthroline, and partially by beta-mercaptoethanol. Is not inhibited by aprotinin and leupeptin. This protein is a zinc metalloprotease from snake venom that causes hemorrhage in mice after intradermal injection. It inhibits platelet aggregation induced by collagen and ADP. Has moderate edema activity, but no myotoxic activity. It hydrolyzes the Aalpha-chain and more slowly the Bbeta-chain of fibrinogen, without affecting the gamma-chains. It also shows proteolytic activity on casein. It is unable to clot plasma. It also shows bactericidal activity against E.coli and S.aureus. The polypeptide is Zinc metalloproteinase-disintegrin-like BjussuMP-1 (Bothrops jararacussu (Jararacussu)).